Reading from the N-terminus, the 305-residue chain is Glutaminase (305 aa).

Substrate is bound by residues serine 61, asparagine 113, glutamate 158, asparagine 165, tyrosine 189, tyrosine 241, and valine 259.

The protein belongs to the glutaminase family. As to quaternary structure, homotetramer.

It carries out the reaction L-glutamine + H2O = L-glutamate + NH4(+). This chain is Glutaminase, found in Alkaliphilus oremlandii (strain OhILAs) (Clostridium oremlandii (strain OhILAs)).